An 887-amino-acid polypeptide reads, in one-letter code: Bifunctional uridylyltransferase/uridylyl-removing enzyme (887 aa).

Residues 1 to 337 (MINTSPLLNY…RLPNYERKIE (337 aa)) are uridylyltransferase. Residues 339–699 (VNDHFKIVDN…AHRKAAQDAV (361 aa)) form a uridylyl-removing region. Residues 457 to 579 (VDAHTLLLLR…LGDMEHLDYL (123 aa)) enclose the HD domain. ACT domains lie at 700 to 782 (QIFI…LMQR) and 809 to 887 (MVEI…ICQH).

Belongs to the GlnD family. It depends on Mg(2+) as a cofactor.

It carries out the reaction [protein-PII]-L-tyrosine + UTP = [protein-PII]-uridylyl-L-tyrosine + diphosphate. The catalysed reaction is [protein-PII]-uridylyl-L-tyrosine + H2O = [protein-PII]-L-tyrosine + UMP + H(+). Uridylyltransferase (UTase) activity is inhibited by glutamine, while glutamine activates uridylyl-removing (UR) activity. Functionally, modifies, by uridylylation and deuridylylation, the PII regulatory proteins (GlnB and homologs), in response to the nitrogen status of the cell that GlnD senses through the glutamine level. Under low glutamine levels, catalyzes the conversion of the PII proteins and UTP to PII-UMP and PPi, while under higher glutamine levels, GlnD hydrolyzes PII-UMP to PII and UMP (deuridylylation). Thus, controls uridylylation state and activity of the PII proteins, and plays an important role in the regulation of nitrogen assimilation and metabolism. In Acinetobacter baumannii (strain AB307-0294), this protein is Bifunctional uridylyltransferase/uridylyl-removing enzyme.